Consider the following 239-residue polypeptide: 2,3,4,5-tetrahydropyridine-2,6-dicarboxylate N-acetyltransferase (239 aa).

It belongs to the transferase hexapeptide repeat family. DapH subfamily.

It carries out the reaction (S)-2,3,4,5-tetrahydrodipicolinate + acetyl-CoA + H2O = L-2-acetamido-6-oxoheptanedioate + CoA. The protein operates within amino-acid biosynthesis; L-lysine biosynthesis via DAP pathway; LL-2,6-diaminopimelate from (S)-tetrahydrodipicolinate (acetylase route): step 1/3. Its function is as follows. Catalyzes the transfer of an acetyl group from acetyl-CoA to tetrahydrodipicolinate. The chain is 2,3,4,5-tetrahydropyridine-2,6-dicarboxylate N-acetyltransferase from Staphylococcus aureus (strain bovine RF122 / ET3-1).